The chain runs to 341 residues: Nicotinate-nucleotide--dimethylbenzimidazole phosphoribosyltransferase (341 aa).

The active-site Proton acceptor is Glu-306.

This sequence belongs to the CobT family.

It catalyses the reaction 5,6-dimethylbenzimidazole + nicotinate beta-D-ribonucleotide = alpha-ribazole 5'-phosphate + nicotinate + H(+). It participates in nucleoside biosynthesis; alpha-ribazole biosynthesis; alpha-ribazole from 5,6-dimethylbenzimidazole: step 1/2. Catalyzes the synthesis of alpha-ribazole-5'-phosphate from nicotinate mononucleotide (NAMN) and 5,6-dimethylbenzimidazole (DMB). The polypeptide is Nicotinate-nucleotide--dimethylbenzimidazole phosphoribosyltransferase (Methylocella silvestris (strain DSM 15510 / CIP 108128 / LMG 27833 / NCIMB 13906 / BL2)).